The sequence spans 119 residues: Fluoride-specific ion channel FluC (119 aa).

The next 3 membrane-spanning stretches (helical) occupy residues 37 to 54 (LFAN…AETV), 61 to 83 (LLLI…ETVT), and 93 to 112 (ALSN…WLGL). Na(+) contacts are provided by glycine 69 and threonine 72.

This sequence belongs to the fluoride channel Fluc/FEX (TC 1.A.43) family.

It is found in the cell inner membrane. The catalysed reaction is fluoride(in) = fluoride(out). Its activity is regulated as follows. Na(+) is not transported, but it plays an essential structural role and its presence is essential for fluoride channel function. Fluoride-specific ion channel. Important for reducing fluoride concentration in the cell, thus reducing its toxicity. This Neisseria meningitidis serogroup C (strain 053442) protein is Fluoride-specific ion channel FluC.